The chain runs to 668 residues: tRNA 5-methylaminomethyl-2-thiouridine biosynthesis bifunctional protein MnmC (668 aa).

The interval 1 to 245 (MKHYSIQPAN…KREMLCGVME (245 aa)) is tRNA (mnm(5)s(2)U34)-methyltransferase. The tract at residues 270–668 (IGGGIASALL…LLKGKAVKAG (399 aa)) is FAD-dependent cmnm(5)s(2)U34 oxidoreductase.

It in the N-terminal section; belongs to the methyltransferase superfamily. tRNA (mnm(5)s(2)U34)-methyltransferase family. This sequence in the C-terminal section; belongs to the DAO family. FAD serves as cofactor.

It is found in the cytoplasm. It catalyses the reaction 5-aminomethyl-2-thiouridine(34) in tRNA + S-adenosyl-L-methionine = 5-methylaminomethyl-2-thiouridine(34) in tRNA + S-adenosyl-L-homocysteine + H(+). Functionally, catalyzes the last two steps in the biosynthesis of 5-methylaminomethyl-2-thiouridine (mnm(5)s(2)U) at the wobble position (U34) in tRNA. Catalyzes the FAD-dependent demodification of cmnm(5)s(2)U34 to nm(5)s(2)U34, followed by the transfer of a methyl group from S-adenosyl-L-methionine to nm(5)s(2)U34, to form mnm(5)s(2)U34. The polypeptide is tRNA 5-methylaminomethyl-2-thiouridine biosynthesis bifunctional protein MnmC (Shigella dysenteriae serotype 1 (strain Sd197)).